A 1522-amino-acid polypeptide reads, in one-letter code: Lysine-specific demethylase 5B (1522 aa).

The region spanning 10–51 is the JmjN domain; the sequence is CPVFEPSWEEFADPFAFIHKIRPIAEQTGICKVRPPPDWQPP. In terms of domain architecture, ARID spans 75 to 165; that stretch reads TRVKLNFLDQ…ILYPYNLFQS (91 aa). Residues 180-192 are compositionally biased toward basic and acidic residues; sequence DTKDKEYKPHDIP. A disordered region spans residues 180–229; that stretch reads DTKDKEYKPHDIPQRQSVQPSESCPPARRAKRLRAEATNIKTESDSPEVR. The segment at 284-334 adopts a PHD-type 1 zinc-finger fold; it reads LYVCLLCGSGNDEDRLLLCDGCDDSYHTFCLIPPLHDVPKGDWRCPQCLAQ. A 2-oxoglutarate-binding site is contributed by Tyr-400. The JmjC domain occupies 428–594; that stretch reads EYLDSGWNLN…LGRQCIEHYR (167 aa). Fe cation is bound by residues His-474 and Glu-476. 2-oxoglutarate is bound by residues Ser-482, Asn-484, and Lys-492. His-562 serves as a coordination point for Fe cation. The segment at 667-719 adopts a C5HC2 zinc-finger fold; it reads CYKCKTTCFMSAVYCPCKPGLLVCLYHVEDLCSCPTYQYKLGYRYTLEELYPM. A PHD-type 2 zinc finger spans residues 1151–1199; it reads LKVCVCQKEPAAPMIQCELCRGFFHTGCVSVPHALQGPRVWLCPQCRRS. The span at 1353–1365 shows a compositional bias: polar residues; it reads LQAEQKPSVGPSN. 2 disordered regions span residues 1353–1373 and 1400–1460; these read LQAEQKPSVGPSNEKSECCRG and ARVR…DSED. Residues 1400–1416 are compositionally biased toward basic residues; sequence ARVRKMRTPKKKKLKLS. The segment covering 1426 to 1442 has biased composition (basic and acidic residues); that stretch reads RMERERERLLEAQRSSE. The PHD-type 3 zinc finger occupies 1462–1516; it reads DAICPAVTCLQPEGEEVDWVQCDGSCNQWFHQVCVGISPEMAEKEDYICASCAGK.

It belongs to the JARID1 histone demethylase family. Fe(2+) is required as a cofactor.

The protein resides in the nucleus. It catalyses the reaction N(6),N(6),N(6)-trimethyl-L-lysyl(4)-[histone H3] + 3 2-oxoglutarate + 3 O2 = L-lysyl(4)-[histone H3] + 3 formaldehyde + 3 succinate + 3 CO2. In terms of biological role, histone demethylase that demethylates 'Lys-4' of histone H3, thereby playing a central role in histone code. Does not demethylate histone H3 'Lys-9' or H3 'Lys-27'. Demethylates trimethylated, dimethylated and monomethylated H3 'Lys-4'. Acts as a transcriptional corepressor. May repress the CLOCK-BMAL1 heterodimer-mediated transcriptional activation of the core clock component PER2. The polypeptide is Lysine-specific demethylase 5B (KDM5B) (Gallus gallus (Chicken)).